We begin with the raw amino-acid sequence, 466 residues long: Zinc finger and SCAN domain-containing protein 26 (466 aa).

Residue lysine 21 forms a Glycyl lysine isopeptide (Lys-Gly) (interchain with G-Cter in SUMO2) linkage. One can recognise an SCAN box domain in the interval cysteine 42–arginine 124. Composition is skewed to basic and acidic residues over residues arginine 124–glutamine 135 and lysine 163–serine 173. The segment at arginine 124–threonine 182 is disordered. The segment at serine 220–histidine 242 adopts a C2H2-type 1; degenerate zinc-finger fold. 7 C2H2-type zinc fingers span residues histidine 270–histidine 292, tyrosine 298–histidine 320, tyrosine 326–histidine 348, arginine 354–histidine 376, histidine 382–histidine 404, phenylalanine 410–histidine 432, and tyrosine 438–histidine 460.

Its subcellular location is the nucleus. Its function is as follows. May be involved in transcriptional regulation. This is Zinc finger and SCAN domain-containing protein 26 (Zscan26) from Mus musculus (Mouse).